The following is a 338-amino-acid chain: Ornithine carbamoyltransferase (338 aa).

Residues 56 to 59, Gln83, Arg107, and 134 to 137 contribute to the carbamoyl phosphate site; these read STRT and HPTQ. L-ornithine-binding positions include Asn168, Asp232, and 236-237; that span reads SM. Residues 274 to 275 and Arg320 each bind carbamoyl phosphate; that span reads CL.

Belongs to the aspartate/ornithine carbamoyltransferase superfamily. OTCase family.

The protein resides in the cytoplasm. It carries out the reaction carbamoyl phosphate + L-ornithine = L-citrulline + phosphate + H(+). It functions in the pathway amino-acid biosynthesis; L-arginine biosynthesis; L-arginine from L-ornithine and carbamoyl phosphate: step 1/3. Functionally, reversibly catalyzes the transfer of the carbamoyl group from carbamoyl phosphate (CP) to the N(epsilon) atom of ornithine (ORN) to produce L-citrulline. This Photorhabdus laumondii subsp. laumondii (strain DSM 15139 / CIP 105565 / TT01) (Photorhabdus luminescens subsp. laumondii) protein is Ornithine carbamoyltransferase.